The following is a 901-amino-acid chain: HTH-type transcriptional regulator MalT (901 aa).

39-46 is an ATP binding site; the sequence is SPAGYGKT. In terms of domain architecture, HTH luxR-type spans 829-894; it reads ELIRTSPLTQ…DAVQHAQQLL (66 aa). Residues 853 to 872 constitute a DNA-binding region (H-T-H motif); the sequence is NEQIAGELEVAATTIKTHIR.

Belongs to the MalT family. In terms of assembly, monomer in solution. Oligomerizes to an active state in the presence of the positive effectors ATP and maltotriose.

With respect to regulation, activated by ATP and maltotriose, which are both required for DNA binding. Positively regulates the transcription of the maltose regulon whose gene products are responsible for uptake and catabolism of malto-oligosaccharides. Specifically binds to the promoter region of its target genes, recognizing a short DNA motif called the MalT box. This Escherichia fergusonii (strain ATCC 35469 / DSM 13698 / CCUG 18766 / IAM 14443 / JCM 21226 / LMG 7866 / NBRC 102419 / NCTC 12128 / CDC 0568-73) protein is HTH-type transcriptional regulator MalT.